Reading from the N-terminus, the 183-residue chain is GMP synthase [glutamine-hydrolyzing] subunit A (183 aa).

The 181-residue stretch at 3–183 (HILVVDNHGQ…VFENFVAICE (181 aa)) folds into the Glutamine amidotransferase type-1 domain. C74 acts as the Nucleophile in catalysis. Active-site residues include H162 and E164.

As to quaternary structure, heterodimer composed of a glutamine amidotransferase subunit (A) and a GMP-binding subunit (B).

The catalysed reaction is XMP + L-glutamine + ATP + H2O = GMP + L-glutamate + AMP + diphosphate + 2 H(+). It participates in purine metabolism; GMP biosynthesis; GMP from XMP (L-Gln route): step 1/1. Its function is as follows. Catalyzes the synthesis of GMP from XMP. The chain is GMP synthase [glutamine-hydrolyzing] subunit A from Halobacterium salinarum (strain ATCC 700922 / JCM 11081 / NRC-1) (Halobacterium halobium).